We begin with the raw amino-acid sequence, 61 residues long: uncharacterized protein (61 aa).

This is an uncharacterized protein from Escherichia coli O6:K15:H31 (strain 536 / UPEC).